The sequence spans 920 residues: Translation initiation factor IF-2 (920 aa).

Composition is skewed to basic and acidic residues over residues glutamate 149–valine 175, alanine 186–lysine 197, and alanine 255–lysine 265. Disordered regions lie at residues glutamate 149–lysine 197 and glutamate 245–glutamine 319. Over residues serine 301–glycine 311 the composition is skewed to gly residues. Residues proline 418–glutamate 585 enclose the tr-type G domain. The tract at residues glycine 427–threonine 434 is G1. Glycine 427 to threonine 434 serves as a coordination point for GTP. Positions glycine 452–histidine 456 are G2. The G3 stretch occupies residues aspartate 473–glycine 476. GTP is bound by residues aspartate 473–histidine 477 and asparagine 527–aspartate 530. A G4 region spans residues asparagine 527 to aspartate 530. A G5 region spans residues serine 563–lysine 565.

Belongs to the TRAFAC class translation factor GTPase superfamily. Classic translation factor GTPase family. IF-2 subfamily.

It localises to the cytoplasm. Functionally, one of the essential components for the initiation of protein synthesis. Protects formylmethionyl-tRNA from spontaneous hydrolysis and promotes its binding to the 30S ribosomal subunits. Also involved in the hydrolysis of GTP during the formation of the 70S ribosomal complex. This is Translation initiation factor IF-2 from Polynucleobacter asymbioticus (strain DSM 18221 / CIP 109841 / QLW-P1DMWA-1) (Polynucleobacter necessarius subsp. asymbioticus).